The primary structure comprises 888 residues: Inactive deaminase YJL070C (888 aa).

Residues 1 to 42 are disordered; the sequence is MQAVERRPSLLFDEYQNSVTKPNETKNKEARVLSENDGDVSP. At serine 9 the chain carries Phosphoserine. Positions 23–34 are enriched in basic and acidic residues; that stretch reads NETKNKEARVLS. Phosphoserine is present on residues serine 41, serine 178, and serine 180.

This sequence belongs to the metallo-dependent hydrolases superfamily. Adenosine and AMP deaminases family.

This is Inactive deaminase YJL070C from Saccharomyces cerevisiae (strain ATCC 204508 / S288c) (Baker's yeast).